The sequence spans 467 residues: MSTGKVVQVIGPVVDVEFSLNDKLPDINNALIIQKDNDDTLTVEVSLELGDGVVRTVAMDGTDGLRRGMTVEDTGSSITVPVGKETLGRVFNVLGETIDGGPEFGPDAERNPIHRDAPKYDELTTSTEVLETGIKVIDLLAPYVRGGKIGLFGGAGVGKTVLIQELIHNIAQEHNGISVFTGVGERTREGNDLYFEMKASGVLKNTAMVYGQMNEPPGARMRVALTGLTIAEYFRDVQGQDVLLFIDNIFRFTQAGSEVSALLGRIPSAVGYQPTLATEMGQLQERITSTKKGSVTSIQAVYVPADDYTDPAPATTFAHLDATTNLERSLTEQGIYPAVDPLASSSIALDPSIVGEEHYQVATEVQRVLQRYRELQDIISILGMDELSDEEKTTVARARRIQFFLSQNFFVAENFTGQPGSYVPINDTIKGFKEILEGKYDDLPEDAFRQVGKIDDVVEKAKSMVTD.

Residue 153 to 160 coordinates ATP; that stretch reads GGAGVGKT.

Belongs to the ATPase alpha/beta chains family. As to quaternary structure, F-type ATPases have 2 components, CF(1) - the catalytic core - and CF(0) - the membrane proton channel. CF(1) has five subunits: alpha(3), beta(3), gamma(1), delta(1), epsilon(1). CF(0) has three main subunits: a(1), b(2) and c(9-12). The alpha and beta chains form an alternating ring which encloses part of the gamma chain. CF(1) is attached to CF(0) by a central stalk formed by the gamma and epsilon chains, while a peripheral stalk is formed by the delta and b chains.

It localises to the cell membrane. It catalyses the reaction ATP + H2O + 4 H(+)(in) = ADP + phosphate + 5 H(+)(out). Its function is as follows. Produces ATP from ADP in the presence of a proton gradient across the membrane. The catalytic sites are hosted primarily by the beta subunits. This Lactiplantibacillus plantarum (strain ATCC BAA-793 / NCIMB 8826 / WCFS1) (Lactobacillus plantarum) protein is ATP synthase subunit beta.